A 77-amino-acid chain; its full sequence is Envelope glycoprotein (77 aa).

Topologically, residues 1–24 are extracellular; it reads LERQKNQNWYEGWFNSSPWFTTLL. The chain crosses the membrane as a helical span at residues 25–45; it reads STIAGPLLLLLLLLILGPCII. The S-palmitoyl cysteine; by host moiety is linked to residue Cys-43. Residues 46 to 77 lie on the Cytoplasmic side of the membrane; the sequence is NRLVQFINNRVSAVKILVLRQKYQTLDNEDNL. Positions 68–71 match the YXXL motif; contains endocytosis signal motif; that stretch reads YQTL.

As to quaternary structure, the mature envelope protein (Env) consists of a trimer of SU-TM heterodimers attached by noncovalent interactions or by a labile interchain disulfide bond. Specific enzymatic cleavages in vivo yield mature proteins. Envelope glycoproteins are synthesized as an inactive precursor that is N-glycosylated and processed likely by host cell furin or by a furin-like protease in the Golgi to yield the mature SU and TM proteins. The cleavage site between SU and TM requires the minimal sequence [KR]-X-[KR]-R. The R-peptide is released from the C-terminus of the cytoplasmic tail of the TM protein upon particle formation as a result of proteolytic cleavage by the viral protease. Cleavage of this peptide is required for TM to become fusogenic. Post-translationally, the transmembrane protein is palmitoylated. In terms of processing, the R-peptide is palmitoylated.

It is found in the virion membrane. Its subcellular location is the host cell membrane. The surface protein (SU) attaches the virus to the host cell by binding to its receptor. This interaction triggers the refolding of the transmembrane protein (TM) and is thought to activate its fusogenic potential by unmasking its fusion peptide. Fusion occurs at the host cell plasma membrane. Its function is as follows. The transmembrane protein (TM) acts as a class I viral fusion protein. Under the current model, the protein has at least 3 conformational states: pre-fusion native state, pre-hairpin intermediate state, and post-fusion hairpin state. During viral and target cell membrane fusion, the coiled coil regions (heptad repeats) assume a trimer-of-hairpins structure, positioning the fusion peptide in close proximity to the C-terminal region of the ectodomain. The formation of this structure appears to drive apposition and subsequent fusion of viral and target cell membranes. Membranes fusion leads to delivery of the nucleocapsid into the cytoplasm. The protein is Envelope glycoprotein (env) of Woolly monkey sarcoma virus (WMSV).